The primary structure comprises 647 residues: Threonine--tRNA ligase (647 aa).

The region spanning 1–61 (MIKITFPDGA…EEDGSIEIVT (61 aa)) is the TGS domain. The catalytic stretch occupies residues 240–538 (DHRKLGKELD…LIETYKGAFP (299 aa)). Positions 334, 385, and 515 each coordinate Zn(2+).

This sequence belongs to the class-II aminoacyl-tRNA synthetase family. In terms of assembly, homodimer. Requires Zn(2+) as cofactor.

It localises to the cytoplasm. The enzyme catalyses tRNA(Thr) + L-threonine + ATP = L-threonyl-tRNA(Thr) + AMP + diphosphate + H(+). Functionally, catalyzes the attachment of threonine to tRNA(Thr) in a two-step reaction: L-threonine is first activated by ATP to form Thr-AMP and then transferred to the acceptor end of tRNA(Thr). Also edits incorrectly charged L-seryl-tRNA(Thr). In Streptococcus pyogenes serotype M1, this protein is Threonine--tRNA ligase.